We begin with the raw amino-acid sequence, 467 residues long: Dimethylamine methyltransferase MtbB2 (467 aa).

Residue Pyl-356 is a non-standard amino acid, pyrrolysine.

Belongs to the dimethylamine methyltransferase family.

It carries out the reaction Co(I)-[dimethylamine-specific corrinoid protein] + dimethylamine + H(+) = methyl-Co(III)-[dimethylamine-specific corrinoid protein] + methylamine. It participates in one-carbon metabolism; methanogenesis from dimethylamine. Catalyzes the transfer of a methyl group from dimethylamine to the corrinoid cofactor of MtbC. This Methanosarcina barkeri (strain Fusaro / DSM 804) protein is Dimethylamine methyltransferase MtbB2 (mtbB2).